Consider the following 224-residue polypeptide: Ribonuclease HII (224 aa).

Positions 33–224 (FHVAGVDEVG…LKERYRNDVS (192 aa)) constitute an RNase H type-2 domain. A divalent metal cation-binding residues include D39, E40, and D131.

It belongs to the RNase HII family. Requires Mn(2+) as cofactor. Mg(2+) serves as cofactor.

The protein localises to the cytoplasm. The catalysed reaction is Endonucleolytic cleavage to 5'-phosphomonoester.. Functionally, endonuclease that specifically degrades the RNA of RNA-DNA hybrids. The protein is Ribonuclease HII of Bartonella tribocorum (strain CIP 105476 / IBS 506).